Consider the following 372-residue polypeptide: UDP-2-acetamido-2,6-beta-L-arabino-hexul-4-ose reductase (372 aa).

NAD(+) is bound by residues 7 to 30 (GANG…EVVP), L53, Y103, and K107. The active-site Proton acceptor is the Y103. Substrate-binding positions include N132 and 279-282 (HPGV).

This sequence belongs to the NAD(P)-dependent epimerase/dehydratase family. In terms of assembly, homodimer.

The catalysed reaction is UDP-2-acetamido-2,6-dideoxy-beta-L-arabino-hex-4-ulose + NADH + H(+) = UDP-2-acetamido-2,6-dideoxy-beta-L-talose + NAD(+). It carries out the reaction UDP-2-acetamido-2,6-dideoxy-beta-L-arabino-hex-4-ulose + NADPH + H(+) = UDP-2-acetamido-2,6-dideoxy-beta-L-talose + NADP(+). It functions in the pathway bacterial outer membrane biogenesis; LPS O-antigen biosynthesis. Bifunctional enzyme that mediates C-3 epimerization of the second intermediate followed by reduction at C-4 during serogroup O11 O-antigen biosynthesis, thus catalyzing the conversion of UDP-N-acetyl-D-glucosamine to precursors for the biosynthesis of O antigen. In Pseudomonas aeruginosa (strain ATCC 29260 / BCRC 12902 / CIP 102967 / NCIMB 11965 / PA103), this protein is UDP-2-acetamido-2,6-beta-L-arabino-hexul-4-ose reductase.